The sequence spans 124 residues: uncharacterized protein (124 aa).

The helical transmembrane segment at 70 to 90 (LLYLALVLLLVVILSTAFFSI) threads the bilayer.

Its subcellular location is the membrane. This is an uncharacterized protein from Saccharomyces cerevisiae (strain ATCC 204508 / S288c) (Baker's yeast).